A 513-amino-acid polypeptide reads, in one-letter code: Maturase K (513 aa).

This sequence belongs to the intron maturase 2 family. MatK subfamily.

The protein localises to the plastid. It is found in the chloroplast. Usually encoded in the trnK tRNA gene intron. Probably assists in splicing its own and other chloroplast group II introns. The polypeptide is Maturase K (Keckiella cordifolia (Heart-leafed penstemon)).